The following is a 572-amino-acid chain: Moesin/ezrin/radixin homolog 1 (572 aa).

The FERM domain occupies 1 to 291; that stretch reads MNVRVTTMDA…GNHELYMRRR (291 aa). Residues 456-491 form a disordered region; sequence TTTPSHHHVEEEEEMDNEEELVNGENGNQDFSKDFD. The segment covering 466–477 has biased composition (acidic residues); sequence EEEEMDNEEELV. Phosphothreonine is present on Thr553.

In terms of assembly, interacts with cytoskeletal actin.

It is found in the cell junction. The protein resides in the adherens junction. It localises to the cell projection. Its subcellular location is the microvillus. The protein localises to the rhabdomere. It is found in the cell membrane. The protein resides in the cytoplasm. It localises to the cytoskeleton. In terms of biological role, involved in connections of major cytoskeletal structures to the plasma membrane. In Culex quinquefasciatus (Southern house mosquito), this protein is Moesin/ezrin/radixin homolog 1.